The sequence spans 404 residues: MQFPLASAHEDSPPAGLKLRDSCNRCAVSKIKCSKEKPACARCAKQDKVCEYSATKRAGRKRGSRRHNNPVPSPTTQDLPTAAPSTCPTFLEDPETIPLSPRPPFESYPDLFPGIFSIGDDPLIATPITLDTFSFPFDSFSASPISLPTLDVSDGDHLPDAVPLNHLNHPGDRTDVARATALLASDHASASSMDPAAGPQRPPDEPSSGPICGFIRALGLLNGLSSPAWPTSHHPGLDPRPSSRSIMAENEQTVRAISEMLHCQCFDDGYLLAILSMLILKVLSSYATLLRQTPGPDGDGVSWDNSTPPPGEQGAGVDGEDHCRTIAQQILGQLHRVQRLVSILSQRFNIPGGRARTPDSTAGPDLLSSIETLFPVPGSMLEQMEGLLRKRLRTLSAEIVDILR.

A DNA-binding region (zn(2)-C6 fungal-type) is located at residues 23–50 (CNRCAVSKIKCSKEKPACARCAKQDKVC). 3 disordered regions span residues 54 to 83 (ATKR…PTAA), 188 to 209 (ASAS…PSSG), and 294 to 318 (PGPD…AGVD). A compositionally biased stretch (basic residues) spans 57–68 (RAGRKRGSRRHN). Residues 74–83 (PTTQDLPTAA) are compositionally biased toward polar residues. Positions 188–197 (ASASSMDPAA) are enriched in low complexity.

It is found in the nucleus. Its function is as follows. Transcription factor that regulates the expression of the gene cluster that mediates the biosynthesis of agnestins, dihydroxy-xanthone metabolites. This Paecilomyces divaricatus (Penicillium divaricatum) protein is Agnestins biosynthesis cluster transcription factor AgnL10.